Here is a 132-residue protein sequence, read N- to C-terminus: Protein FAM174C (132 aa).

The first 26 residues, 1–26, serve as a signal peptide directing secretion; it reads MGPRVLQPPLLLLLLALLLAALPCGA. Residues 34–66 are disordered; the sequence is PAQVTLSPPPAVTNGSQPGAPHNSTHTRPPGAS. Positions 46–60 are enriched in polar residues; that stretch reads TNGSQPGAPHNSTHT. A glycan (N-linked (GlcNAc...) asparagine) is linked at asparagine 47. The helical transmembrane segment at 73 to 93 threads the bilayer; the sequence is SFYVILGFCGLTALYFLIRAF. A Phosphothreonine modification is found at threonine 113. The tract at residues 113–132 is disordered; sequence TEMASLDSDEETVFESRNLR. A phosphoserine mark is found at serine 117 and serine 120.

Belongs to the FAM174 family.

Its subcellular location is the membrane. This is Protein FAM174C from Homo sapiens (Human).